Consider the following 118-residue polypeptide: Large ribosomal subunit protein bL20 (118 aa).

It belongs to the bacterial ribosomal protein bL20 family.

Functionally, binds directly to 23S ribosomal RNA and is necessary for the in vitro assembly process of the 50S ribosomal subunit. It is not involved in the protein synthesizing functions of that subunit. The protein is Large ribosomal subunit protein bL20 of Pseudomonas aeruginosa (strain LESB58).